The primary structure comprises 170 residues: Cathelicidin antimicrobial peptide (170 aa).

The signal sequence occupies residues 1–30 (MKTQMDGHSLGRWSLVLLLLGLVMPLAIVA). The propeptide at 31-131 (QVLSYKEAVL…DISCDKDNRR (101 aa)) is cathelin-like domain (CLD). 2 disulfides stabilise this stretch: cysteine 86/cysteine 97 and cysteine 108/cysteine 125. Positions 150-162 (FKRIVQRIKDFLR) are active core.

This sequence belongs to the cathelicidin family. As to quaternary structure, monomer, homodimer or homotrimer (in vitro). Oligomerizes as tetra- or hexamer in solution (in vitro). Post-translationally, proteolytically cleaved by proteinase PRTN3 into antibacterial peptide LL-37. Proteolytically cleaved by cathepsin CTSG and neutrophil elastase ELANE. Resistant to proteolytic degradation in solution, and when bound to both zwitterionic (mimicking mammalian membranes) and negatively charged membranes (mimicking bacterial membranes). In terms of processing, after secretion onto the skin surface, the CAMP gene product is processed by a serine protease-dependent mechanism into multiple novel antimicrobial peptides distinct from and shorter than cathelicidin LL-37. These peptides show enhanced antimicrobial action, acquiring the ability to kill skin pathogens such as S.aureus, E.coli and C.albicans. These peptides have lost the ability to stimulate CXCL8/IL8 release from keratinocytes. The peptides act synergistically, killing bacteria at lower concentrations when present together, and maintain activity at increased salt condition.

It localises to the secreted. Its subcellular location is the vesicle. In terms of biological role, antimicrobial protein that is an integral component of the innate immune system. Binds to bacterial lipopolysaccharides (LPS). Acts via neutrophil N-formyl peptide receptors to enhance the release of CXCL2. Postsecretory processing generates multiple cathelicidin antimicrobial peptides with various lengths which act as a topical antimicrobial defense in sweat on skin. The unprocessed precursor form, cathelicidin antimicrobial peptide, inhibits the growth of Gram-negative E.coli and E.aerogenes with efficiencies comparable to that of the mature peptide LL-37 (in vitro). Antimicrobial peptide that is an integral component of the innate immune system. Binds to bacterial lipopolysaccharides (LPS). Causes membrane permeabilization by forming transmembrane pores (in vitro). Causes lysis of E.coli. Exhibits antimicrobial activity against Gram-negative bacteria such as P.aeruginosa, S.typhimurium, E.aerogenes, E.coli and P.syringae, Gram-positive bacteria such as L.monocytogenes, S.epidermidis, S.pyogenes and S.aureus, as well as vancomycin-resistant enterococci (in vitro). Exhibits antimicrobial activity against methicillin-resistant S.aureus, P.mirabilis, and C.albicans in low-salt media, but not in media containing 100 mM NaCl (in vitro). Forms chiral supramolecular assemblies with quinolone signal (PQS) molecules of P.aeruginosa, which may lead to interference of bacterial quorum signaling and perturbance of bacterial biofilm formation. May form supramolecular fiber-like assemblies on bacterial membranes. Induces cytokine and chemokine producation as well as TNF/TNFA and CSF2/GMCSF production in normal human keratinocytes. Exhibits hemolytic activity against red blood cells. Functionally, exhibits antimicrobial activity against E.coli and B.megaterium (in vitro). The protein is Cathelicidin antimicrobial peptide of Pongo pygmaeus (Bornean orangutan).